The primary structure comprises 463 residues: Chaperone SurA (463 aa).

The N-terminal stretch at 1-25 (MTKPFSVLLASLLVITSTVSPLASA) is a signal peptide. PpiC domains are found at residues 174 to 276 (GSQY…KLVE) and 289 to 388 (LTEY…QRVG). Disordered regions lie at residues 329–348 (ATAKESSEDTNSRGQGGDLG) and 434–463 (GDRADADATAAPEPAAAPAAPTPPPAQPTR). Low complexity predominate over residues 440-452 (DATAAPEPAAAPA). Over residues 453–463 (APTPPPAQPTR) the composition is skewed to pro residues.

Its subcellular location is the periplasm. It carries out the reaction [protein]-peptidylproline (omega=180) = [protein]-peptidylproline (omega=0). Chaperone involved in the correct folding and assembly of outer membrane proteins. Recognizes specific patterns of aromatic residues and the orientation of their side chains, which are found more frequently in integral outer membrane proteins. May act in both early periplasmic and late outer membrane-associated steps of protein maturation. The chain is Chaperone SurA from Xanthomonas campestris pv. campestris (strain 8004).